A 429-amino-acid chain; its full sequence is Adenylosuccinate synthetase (429 aa).

GTP contacts are provided by residues 13-19 (GDEGKGK) and 41-43 (GHT). Catalysis depends on Asp-14, which acts as the Proton acceptor. Mg(2+)-binding residues include Asp-14 and Gly-41. Residues 14–17 (DEGK), 39–42 (NAGH), Thr-130, Arg-144, Gln-225, Thr-240, and Arg-304 contribute to the IMP site. The Proton donor role is filled by His-42. 300–306 (ATTGRRR) lines the substrate pocket. GTP is bound by residues Arg-306, 332-334 (KLD), and 417-419 (STG).

This sequence belongs to the adenylosuccinate synthetase family. As to quaternary structure, homodimer. Requires Mg(2+) as cofactor.

Its subcellular location is the cytoplasm. It catalyses the reaction IMP + L-aspartate + GTP = N(6)-(1,2-dicarboxyethyl)-AMP + GDP + phosphate + 2 H(+). Its pathway is purine metabolism; AMP biosynthesis via de novo pathway; AMP from IMP: step 1/2. In terms of biological role, plays an important role in the de novo pathway of purine nucleotide biosynthesis. Catalyzes the first committed step in the biosynthesis of AMP from IMP. This Buchnera aphidicola subsp. Baizongia pistaciae (strain Bp) protein is Adenylosuccinate synthetase.